Consider the following 145-residue polypeptide: Basic phospholipase A2 KPA2 (145 aa).

An N-terminal signal peptide occupies residues 1–19 (MYPAHLLVLVAVCVSLLGA). The propeptide occupies 20–27 (ANIPPQPL). Intrachain disulfides connect Cys-38/Cys-97, Cys-52/Cys-144, Cys-54/Cys-70, Cys-69/Cys-125, Cys-76/Cys-118, Cys-86/Cys-111, and Cys-104/Cys-116. Positions 53, 55, and 57 each coordinate Ca(2+). Residue His-73 is part of the active site. Asp-74 is a Ca(2+) binding site. Asp-119 is a catalytic residue.

It belongs to the phospholipase A2 family. Group I subfamily. D49 sub-subfamily. As to quaternary structure, monomer. Ca(2+) serves as cofactor. In terms of tissue distribution, expressed by the venom gland.

It is found in the secreted. The enzyme catalyses a 1,2-diacyl-sn-glycero-3-phosphocholine + H2O = a 1-acyl-sn-glycero-3-phosphocholine + a fatty acid + H(+). Snake venom phospholipase A2 (PLA2) that shows anticoagulant and neurotoxic activities. PLA2 catalyzes the calcium-dependent hydrolysis of the 2-acyl groups in 3-sn-phosphoglycerides. The protein is Basic phospholipase A2 KPA2 of Bungarus caeruleus (Indian krait).